Here is a 1465-residue protein sequence, read N- to C-terminus: Protein clueless (1465 aa).

The segment at 1–87 is disordered; the sequence is MALEIDAKNA…SNGHSENGDA (87 aa). Over residues 30-51 the composition is skewed to low complexity; it reads HNNNNNAPAAGEKNLVNGSSAA. Basic residues predominate over residues 52 to 61; that stretch reads TKKKGKKNRN. S273 is subject to Phosphoserine. One can recognise a Clu domain in the interval 427–669; that stretch reads RAEDAFSSKL…RTFPPDVNFL (243 aa). A compositionally biased stretch (basic and acidic residues) spans 742 to 767; it reads AEKQEEPNEEQPEKTEEQPAEKEESK. 2 disordered regions span residues 742–776 and 962–1021; these read AEKQEEPNEEQPEKTEEQPAEKEESKPTPSETKSA and VSSD…SNSD. The span at 970 to 986 shows a compositional bias: basic residues; the sequence is KQPRNNSGKHNKHKAAK. Composition is skewed to low complexity over residues 987–1003 and 1010–1020; these read ASKPQAAAAQNGNATAA and ATTSGATSSNS. TPR repeat units lie at residues 1114–1147, 1240–1273, and 1275–1308; these read AYNFYTTGQAKIQQGMLKEGYELISEALNLLNNV, ALIDSNISLILHALGEYELSLRFIEHALKLNLKY, and GNKAMHVAVSYHLMARIQSCMGDFRSALNNEKET. Residues 1428-1465 are disordered; the sequence is NNNDNASETEQPKDEASAAGTPTQLTNGSEESTATVSS. The span at 1447 to 1465 shows a compositional bias: polar residues; the sequence is GTPTQLTNGSEESTATVSS.

Belongs to the CLU family.

Its subcellular location is the cytoplasm. In terms of biological role, mRNA-binding protein involved in proper cytoplasmic distribution of mitochondria. This Drosophila virilis (Fruit fly) protein is Protein clueless.